The following is a 352-amino-acid chain: Transcriptional regulatory protein AlgP (352 aa).

The interval 128–352 (KALESRKAKP…SNGAAPTSAS (225 aa)) is disordered. A compositionally biased stretch (low complexity) spans 138-341 (ATKPAAKAAA…SSAASATPAA (204 aa)).

In terms of biological role, the promoter for a critical alginate biosynthetic gene, AlgD, encoding GDP-mannose dehydrogenase, is activated only under conditions reminiscent of the cystic fibrosis lung (i.e. under high osmolarity), and at least two regulatory genes, AlgP and AlgQ, have been implicated in this activation process. In Pseudomonas aeruginosa (strain ATCC 15692 / DSM 22644 / CIP 104116 / JCM 14847 / LMG 12228 / 1C / PRS 101 / PAO1), this protein is Transcriptional regulatory protein AlgP (algP).